Reading from the N-terminus, the 1046-residue chain is Probable inorganic carbon transporter subunit DabA1 (1046 aa).

Zn(2+)-binding residues include Cys462, Asp464, His721, and Cys736.

Belongs to the inorganic carbon transporter (TC 9.A.2) DabA family. In terms of assembly, forms a complex with DabB1. Zn(2+) serves as cofactor.

It is found in the cell inner membrane. Part of an energy-coupled inorganic carbon pump. The protein is Probable inorganic carbon transporter subunit DabA1 of Halothiobacillus neapolitanus (strain ATCC 23641 / c2) (Thiobacillus neapolitanus).